The chain runs to 258 residues: MTQIGQYIKLNDAVPNLILHITTKLLRNENLTSFKQEELLLIQHVCTSMLSHGIKILLLRESLYNSGIGDIVILNRKISNNYWFRLFSILKQHSDAELLRHMFNESHSAYISKKLHYSGNVSHIINFLFMDEFGLSLKIPEEIICEGNIVFSVGAIYNHRLLKICRFFNRFWGDQEREPAVRLICKHLWFAYLIMFGKFEISTLAYNQQRAEHKAGLFSFLQNDFKVFCGMSENPQLLDSSAIFDLTGISAEDLFSYE.

Belongs to the herpesviridae UL79 family.

The chain is Protein U52 (U52) from Human herpesvirus 6B (strain Z29) (HHV-6 variant B).